Here is a 100-residue protein sequence, read N- to C-terminus: Apolipoprotein C-II (100 aa).

A signal peptide spans 1-22 (MSSQFLLAFFLVLLVLGYEVQG). The lipid binding stretch occupies residues 66–74 (SVDEKLRDM). Residues 78–100 (SSAAMSTYAGIFTDQLFTLLKGE) are lipoprotein lipase cofactor.

This sequence belongs to the apolipoprotein C2 family. Post-translationally, proapolipoprotein C-II is synthesized as a sialic acid containing glycoprotein which is subsequently desialylated prior to its proteolytic processing. In terms of processing, proapolipoprotein C-II, the major form found in plasma undergoes proteolytic cleavage of its N-terminal hexapeptide to generate the mature form apolipoprotein C-II, which occurs as the minor form in plasma.

The protein resides in the secreted. Component of chylomicrons, very low-density lipoproteins (VLDL), low-density lipoproteins (LDL), and high-density lipoproteins (HDL) in plasma. Plays an important role in lipoprotein metabolism as an activator of lipoprotein lipase. The sequence is that of Apolipoprotein C-II (APOC2) from Cricetulus griseus (Chinese hamster).